A 636-amino-acid polypeptide reads, in one-letter code: Methionine--tRNA ligase (636 aa).

Positions 12–22 (YYVNGDPHVGS) match the 'HIGH' region motif. 4 residues coordinate Zn(2+): Cys-127, Cys-130, Cys-145, and Cys-148. The 'KMSKS' region motif lies at 298 to 302 (KMSKS). Lys-301 contacts ATP. Positions 535–636 (EFNKIEIKVV…KTVEAGAIVS (102 aa)) constitute a tRNA-binding domain.

It belongs to the class-I aminoacyl-tRNA synthetase family. MetG type 2A subfamily. In terms of assembly, homodimer. It depends on Zn(2+) as a cofactor.

It is found in the cytoplasm. It catalyses the reaction tRNA(Met) + L-methionine + ATP = L-methionyl-tRNA(Met) + AMP + diphosphate. Its function is as follows. Is required not only for elongation of protein synthesis but also for the initiation of all mRNA translation through initiator tRNA(fMet) aminoacylation. This is Methionine--tRNA ligase (metG) from Fusobacterium nucleatum subsp. nucleatum (strain ATCC 25586 / DSM 15643 / BCRC 10681 / CIP 101130 / JCM 8532 / KCTC 2640 / LMG 13131 / VPI 4355).